The sequence spans 395 residues: S-adenosylmethionine synthase 3 (395 aa).

Glutamate 10 is a binding site for Mg(2+). Histidine 16 contributes to the ATP binding site. A K(+)-binding site is contributed by glutamate 44. L-methionine contacts are provided by glutamate 57 and glutamine 100. Residues 168-170, 236-239, aspartate 247, 253-254, alanine 270, lysine 274, and lysine 278 contribute to the ATP site; these read DGK, SGRF, and RK. L-methionine is bound at residue aspartate 247. Position 278 (lysine 278) interacts with L-methionine.

Belongs to the AdoMet synthase family. As to quaternary structure, homotetramer. Mn(2+) is required as a cofactor. Mg(2+) serves as cofactor. It depends on Co(2+) as a cofactor. The cofactor is K(+).

It is found in the cytoplasm. It catalyses the reaction L-methionine + ATP + H2O = S-adenosyl-L-methionine + phosphate + diphosphate. Its pathway is amino-acid biosynthesis; S-adenosyl-L-methionine biosynthesis; S-adenosyl-L-methionine from L-methionine: step 1/1. Functionally, catalyzes the formation of S-adenosylmethionine from methionine and ATP. The reaction comprises two steps that are both catalyzed by the same enzyme: formation of S-adenosylmethionine (AdoMet) and triphosphate, and subsequent hydrolysis of the triphosphate. This is S-adenosylmethionine synthase 3 (METK3) from Populus trichocarpa (Western balsam poplar).